The primary structure comprises 93 residues: Small ribosomal subunit protein uS19 (93 aa).

This sequence belongs to the universal ribosomal protein uS19 family.

Its function is as follows. Protein S19 forms a complex with S13 that binds strongly to the 16S ribosomal RNA. This Oleidesulfovibrio alaskensis (strain ATCC BAA-1058 / DSM 17464 / G20) (Desulfovibrio alaskensis) protein is Small ribosomal subunit protein uS19.